The following is a 901-amino-acid chain: HTH-type transcriptional regulator MalT (901 aa).

Residue 39–46 (SPAGYGKT) participates in ATP binding. The 66-residue stretch at 829–894 (ELIRTSPLTQ…AAVQHAQKLL (66 aa)) folds into the HTH luxR-type domain. The H-T-H motif DNA-binding region spans 853 to 872 (NEQIAGELEVAATTIKTHIR).

The protein belongs to the MalT family. As to quaternary structure, monomer in solution. Oligomerizes to an active state in the presence of the positive effectors ATP and maltotriose.

Its activity is regulated as follows. Activated by ATP and maltotriose, which are both required for DNA binding. Its function is as follows. Positively regulates the transcription of the maltose regulon whose gene products are responsible for uptake and catabolism of malto-oligosaccharides. Specifically binds to the promoter region of its target genes, recognizing a short DNA motif called the MalT box. The chain is HTH-type transcriptional regulator MalT from Escherichia coli (strain 55989 / EAEC).